Here is a 456-residue protein sequence, read N- to C-terminus: Cytochrome c biogenesis protein CcsB (456 aa).

3 helical membrane passes run 29 to 49 (LRLA…GTVI), 88 to 108 (AGWF…CTFR), and 174 to 194 (VGPI…IWGS).

Belongs to the Ccs1/CcsB family. In terms of assembly, may interact with CcsA.

It is found in the cellular thylakoid membrane. Functionally, required during biogenesis of c-type cytochromes (cytochrome c6 and cytochrome f) at the step of heme attachment. The polypeptide is Cytochrome c biogenesis protein CcsB (Synechococcus sp. (strain ATCC 27144 / PCC 6301 / SAUG 1402/1) (Anacystis nidulans)).